The primary structure comprises 424 residues: Ankyrin repeat domain-containing protein 61 (424 aa).

ANK repeat units lie at residues 80-109, 113-169, 172-201, 205-234, 239-278, 282-311, and 315-348; these read LSFL…DPEA, QGFT…ARVD, HRHC…QVNA, SSMT…SVNC, TGNT…QVNA, DGQA…NVNI, and NGES…PLRL.

The sequence is that of Ankyrin repeat domain-containing protein 61 (ANKRD61) from Bos taurus (Bovine).